The following is a 277-amino-acid chain: Bis(5'-nucleosyl)-tetraphosphatase, symmetrical (277 aa).

The protein belongs to the Ap4A hydrolase family.

It carries out the reaction P(1),P(4)-bis(5'-adenosyl) tetraphosphate + H2O = 2 ADP + 2 H(+). Its function is as follows. Hydrolyzes diadenosine 5',5'''-P1,P4-tetraphosphate to yield ADP. This chain is Bis(5'-nucleosyl)-tetraphosphatase, symmetrical, found in Chromobacterium violaceum (strain ATCC 12472 / DSM 30191 / JCM 1249 / CCUG 213 / NBRC 12614 / NCIMB 9131 / NCTC 9757 / MK).